The sequence spans 323 residues: Arginase, hepatic (323 aa).

Residues histidine 102, aspartate 125, histidine 127, and aspartate 129 each contribute to the Mn(2+) site. Substrate contacts are provided by residues 127–131, 138–140, and aspartate 184; these read HADIN and SGN. 2 residues coordinate Mn(2+): aspartate 233 and aspartate 235. Substrate is bound by residues threonine 247 and glutamate 278.

It belongs to the arginase family. In terms of assembly, homotrimer. It depends on Mn(2+) as a cofactor.

The catalysed reaction is L-arginine + H2O = urea + L-ornithine. It participates in nitrogen metabolism; urea cycle; L-ornithine and urea from L-arginine: step 1/1. The sequence is that of Arginase, hepatic from Aquarana catesbeiana (American bullfrog).